The chain runs to 558 residues: uncharacterized protein (558 aa).

Transmembrane regions (helical) follow at residues 21–41 (IFCF…LPIA), 69–89 (FLDA…STVV), 100–120 (IVLA…AFLA), 160–180 (IIFL…LFYF), 220–240 (AFQA…IDLI), 251–271 (GLGI…GIGY), 303–323 (VITN…VEFI), 386–406 (VFPV…AMFI), 413–433 (TAGG…VAKF), 454–474 (AFLV…LLPL), 479–499 (PVSF…VGLS), and 519–539 (ALCL…LTFV).

The protein belongs to the TrkH potassium transport family.

The protein localises to the cell membrane. This is an uncharacterized protein from Mycoplasma genitalium (strain ATCC 33530 / DSM 19775 / NCTC 10195 / G37) (Mycoplasmoides genitalium).